Reading from the N-terminus, the 208-residue chain is uncharacterized protein (208 aa).

The span at Gln-118–Tyr-134 shows a compositional bias: low complexity. The interval Gln-118–Glu-208 is disordered. Over residues Asn-138–Asn-175 the composition is skewed to polar residues. Positions Lys-187–Lys-201 are enriched in basic residues.

This is an uncharacterized protein from Dictyostelium discoideum (Social amoeba).